Reading from the N-terminus, the 890-residue chain is Translation initiation factor IF-2 (890 aa).

The disordered stretch occupies residues 50–304; it reads LRQGSPEQEE…LQQEFERPTA (255 aa). 3 stretches are compositionally biased toward basic and acidic residues: residues 112–125, 136–147, and 217–262; these read KRSD…RKQE, RALEQEEAKREE, and ALKE…QEAK. A tr-type G domain is found at 390-559; the sequence is GRAPVVTVMG…VLQAELQELK (170 aa). Residues 399–406 are G1; the sequence is GHVDHGKT. Position 399–406 (399–406) interacts with GTP; the sequence is GHVDHGKT. Residues 424–428 form a G2 region; sequence GITQH. A G3 region spans residues 445 to 448; it reads DTPG. GTP-binding positions include 445-449 and 499-502; these read DTPGH and NKMD. Residues 499–502 are G4; sequence NKMD. Positions 535–537 are G5; the sequence is SAM.

Belongs to the TRAFAC class translation factor GTPase superfamily. Classic translation factor GTPase family. IF-2 subfamily.

The protein localises to the cytoplasm. Its function is as follows. One of the essential components for the initiation of protein synthesis. Protects formylmethionyl-tRNA from spontaneous hydrolysis and promotes its binding to the 30S ribosomal subunits. Also involved in the hydrolysis of GTP during the formation of the 70S ribosomal complex. In Halorhodospira halophila (strain DSM 244 / SL1) (Ectothiorhodospira halophila (strain DSM 244 / SL1)), this protein is Translation initiation factor IF-2.